Consider the following 174-residue polypeptide: Peroxisome assembly protein 22 (174 aa).

Residues 9 to 27 form a helical membrane-spanning segment; sequence GYLAIIAAVSIGAAAYLWW.

This sequence belongs to the peroxin-22 family.

The protein resides in the peroxisome membrane. Involved in peroxisome biogenesis. This is Peroxisome assembly protein 22 (PEX22) from Candida glabrata (strain ATCC 2001 / BCRC 20586 / JCM 3761 / NBRC 0622 / NRRL Y-65 / CBS 138) (Yeast).